A 380-amino-acid chain; its full sequence is MVNTVAKPEFEELRPGIKAPAKETILTPRFYTTDFEAMANMDITENKAELEAILEEFRCDYNRHHFVRDEEFEQSWDHIDGETRRLFIEFLERSCTAEFSGFLLYKELSRRLKDRNPLLAECFALMSRDEARHAGFLNKAMADFNLSLDLGFLTQHRSYTYFEPEFIFYATYLSEKIGYWRYITIYRHLEKHPEHRIYPIFRFFENWCQDENRHGDFFDAVMRAQPQMLDRPRTFWQKIKEIPLSLSGKKWARYFMVCWVPPKLWCRFFLLSVFATMYLNDLQRAKFYTALGLDAREYDREVIAKTNETAGRVFPVILDVDHPEFYQRLERCVENNAKLTEIAKQNGGFLKKLPLYLSNVWQMIKLFLIPAKEPTRVAVR.

The protein belongs to the AcsF family. It depends on Fe cation as a cofactor.

The catalysed reaction is Mg-protoporphyrin IX 13-monomethyl ester + 3 NADPH + 3 O2 + 2 H(+) = 3,8-divinyl protochlorophyllide a + 3 NADP(+) + 5 H2O. It participates in porphyrin-containing compound metabolism; chlorophyll biosynthesis (light-independent). Its function is as follows. Catalyzes the formation of the isocyclic ring in chlorophyll biosynthesis. Mediates the cyclase reaction, which results in the formation of divinylprotochlorophyllide (Pchlide) characteristic of all chlorophylls from magnesium-protoporphyrin IX 13-monomethyl ester (MgPMME). The sequence is that of Magnesium-protoporphyrin IX monomethyl ester [oxidative] cyclase 1 from Thermosynechococcus vestitus (strain NIES-2133 / IAM M-273 / BP-1).